Consider the following 184-residue polypeptide: Inosine triphosphate pyrophosphatase (184 aa).

10 to 15 (TGNANK) serves as a coordination point for ITP. Mg(2+) is bound at residue glutamate 38. ITP contacts are provided by residues lysine 50, 66 to 67 (DT), lysine 83, 142 to 145 (FGWD), lysine 163, and 168 to 169 (HR).

It belongs to the HAM1 NTPase family. As to quaternary structure, homodimer. Mg(2+) serves as cofactor. Mn(2+) is required as a cofactor.

It localises to the cytoplasm. It is found in the nucleus. It catalyses the reaction ITP + H2O = IMP + diphosphate + H(+). It carries out the reaction dITP + H2O = dIMP + diphosphate + H(+). The catalysed reaction is XTP + H2O = XMP + diphosphate + H(+). Functionally, pyrophosphatase that hydrolyzes non-canonical purine nucleotides such as inosine triphosphate (ITP), deoxyinosine triphosphate (dITP) or xanthosine 5'-triphosphate (XTP) to their respective monophosphate derivatives. The enzyme does not distinguish between the deoxy- and ribose forms. Probably excludes non-canonical purines from RNA and DNA precursor pools, thus preventing their incorporation into RNA and DNA and avoiding chromosomal lesions. The chain is Inosine triphosphate pyrophosphatase from Fusarium vanettenii (strain ATCC MYA-4622 / CBS 123669 / FGSC 9596 / NRRL 45880 / 77-13-4) (Fusarium solani subsp. pisi).